The sequence spans 353 residues: Replication factor C subunit 2 (353 aa).

M1 is subject to N-acetylmethionine. ATP is bound by residues V28, R32, 65-73 (GPPGTGKTS), N171, and R229.

It belongs to the activator 1 small subunits family. As to quaternary structure, replication factor C (RFC) is a heteropentamer of subunits RFC1, RFC2, RFC3, RFC4 and RFC5 and forms a complex with POL30/PCNA in the presence of ATP. Component of the RAD24-RFC complex which consists of RAD14, RFC2, RFC3, RFC4 and RFC5 and associates with the checkpoint clamp DDC1:MEC3:RAD17 complex. Component of the ELG1-RFC complex which consists of ELG1, RFC2, RFC3, RFC4 and RFC5. Component of the CTF18-RFC complex, which consists of CTF18, CTF8, DCC1, RFC2, RFC3, RFC4 and RFC5. RFC2 interacts with ECO1.

It localises to the nucleus. Its function is as follows. Component of ATP-dependent clamp loader (RFC and RFC-like) complexes for DNA clamps, such as the POL30/PCNA homotrimer and the checkpoint clamp DDC1:MEC3:RAD17 complex. During a clamp loading circle, the RFC:clamp complex binds to DNA and the recognition of the double-stranded/single-stranded junction stimulates ATP hydrolysis by RFC. The complex presumably provides bipartite ATP sites in which one subunit supplies a catalytic site for hydrolysis of ATP bound to the neighboring subunit. Dissociation of RFC from the clamp leaves the clamp encircling DNA. Component of the replication factor C (RFC or activator 1) complex which loads POL30/PCNA and acts during elongation of primed DNA templates by DNA polymerase delta and epsilon. RFC has an essential but redundant activity in sister chromatid cohesion establishment. Component of the RFC-like complex CTF18-RFC which is required for efficient establishment of chromosome cohesion during S-phase and may load or unload POL30/PCNA. Component of the RFC-like RAD24-RFC complex which loads the checkpoint clamp DDC1:MEC3:RAD17 complex and is involved in DNA repair pathways. Component of the RFC-like ELG1-RFC complex which appears to have a role in DNA replication, replication fork re-start, recombination and repair. RFC2 binds ATP and single-stranded DNA. The protein is Replication factor C subunit 2 (RFC2) of Saccharomyces cerevisiae (strain ATCC 204508 / S288c) (Baker's yeast).